The primary structure comprises 57 residues: MLGWVVTFLVVALIAGLLGFGGIAGASIEIAKIIFFIAIVLFLVSAVISIFRGRTRV.

The next 2 membrane-spanning stretches (helical) occupy residues 4–24 (WVVTFLVVALIAGLLGFGGIA) and 30–50 (IAKIIFFIAIVLFLVSAVISI).

Belongs to the UPF0391 family.

It localises to the cell membrane. The protein is UPF0391 membrane protein RPA3505 of Rhodopseudomonas palustris (strain ATCC BAA-98 / CGA009).